The primary structure comprises 227 residues: ATP synthase F(0) complex subunit a (227 aa).

6 consecutive transmembrane segments (helical) span residues 14–34 (FLGI…FPTP), 69–89 (WAIL…LGLL), 99–119 (LSLN…IGMF), 139–159 (VPVL…ALGV), 165–185 (LTAG…LLTM), and 190–210 (ALLT…VAMI).

The protein belongs to the ATPase A chain family. In terms of assembly, component of the ATP synthase complex composed at least of ATP5F1A/subunit alpha, ATP5F1B/subunit beta, ATP5MC1/subunit c (homooctomer), MT-ATP6/subunit a, MT-ATP8/subunit 8, ATP5ME/subunit e, ATP5MF/subunit f, ATP5MG/subunit g, ATP5MK/subunit k, ATP5MJ/subunit j, ATP5F1C/subunit gamma, ATP5F1D/subunit delta, ATP5F1E/subunit epsilon, ATP5PF/subunit F6, ATP5PB/subunit b, ATP5PD/subunit d, ATP5PO/subunit OSCP. ATP synthase complex consists of a soluble F(1) head domain (subunits alpha(3) and beta(3)) - the catalytic core - and a membrane F(0) domain - the membrane proton channel (subunits c, a, 8, e, f, g, k and j). These two domains are linked by a central stalk (subunits gamma, delta, and epsilon) rotating inside the F1 region and a stationary peripheral stalk (subunits F6, b, d, and OSCP). Interacts with DNAJC30; interaction is direct.

The protein resides in the mitochondrion inner membrane. The enzyme catalyses H(+)(in) = H(+)(out). Its function is as follows. Subunit a, of the mitochondrial membrane ATP synthase complex (F(1)F(0) ATP synthase or Complex V) that produces ATP from ADP in the presence of a proton gradient across the membrane which is generated by electron transport complexes of the respiratory chain. ATP synthase complex consist of a soluble F(1) head domain - the catalytic core - and a membrane F(1) domain - the membrane proton channel. These two domains are linked by a central stalk rotating inside the F(1) region and a stationary peripheral stalk. During catalysis, ATP synthesis in the catalytic domain of F(1) is coupled via a rotary mechanism of the central stalk subunits to proton translocation. With the subunit c (ATP5MC1), forms the proton-conducting channel in the F(0) domain, that contains two crucial half-channels (inlet and outlet) that facilitate proton movement from the mitochondrial intermembrane space (IMS) into the matrix. Protons are taken up via the inlet half-channel and released through the outlet half-channel, following a Grotthuss mechanism. This chain is ATP synthase F(0) complex subunit a, found in Scyliorhinus canicula (Small-spotted catshark).